Consider the following 485-residue polypeptide: 3-isopropylmalate dehydratase large subunit (485 aa).

[4Fe-4S] cluster contacts are provided by Cys-367, Cys-427, and Cys-430. The span at 439 to 451 (SPGQRAASTSNRN) shows a compositional bias: polar residues. A disordered region spans residues 439–462 (SPGQRAASTSNRNFEGRQGKGGRT).

This sequence belongs to the aconitase/IPM isomerase family. LeuC type 1 subfamily. In terms of assembly, heterodimer of LeuC and LeuD. The cofactor is [4Fe-4S] cluster.

It carries out the reaction (2R,3S)-3-isopropylmalate = (2S)-2-isopropylmalate. It functions in the pathway amino-acid biosynthesis; L-leucine biosynthesis; L-leucine from 3-methyl-2-oxobutanoate: step 2/4. In terms of biological role, catalyzes the isomerization between 2-isopropylmalate and 3-isopropylmalate, via the formation of 2-isopropylmaleate. This Actinoplanes teichomyceticus protein is 3-isopropylmalate dehydratase large subunit.